The following is a 618-amino-acid chain: Serine--tRNA ligase, cytoplasmic (618 aa).

417 to 419 provides a ligand contact to L-serine; the sequence is TSE. Position 448 to 450 (448 to 450) interacts with ATP; sequence RTE. Position 472 (Glu472) interacts with L-serine. 536–539 contacts ATP; that stretch reads EVSS. Ser570 lines the L-serine pocket.

Belongs to the class-II aminoacyl-tRNA synthetase family. Type-1 seryl-tRNA synthetase subfamily. Homodimer. The tRNA molecule binds across the dimer.

The protein resides in the cytoplasm. The catalysed reaction is tRNA(Ser) + L-serine + ATP = L-seryl-tRNA(Ser) + AMP + diphosphate + H(+). It carries out the reaction tRNA(Sec) + L-serine + ATP = L-seryl-tRNA(Sec) + AMP + diphosphate + H(+). Its pathway is aminoacyl-tRNA biosynthesis; selenocysteinyl-tRNA(Sec) biosynthesis; L-seryl-tRNA(Sec) from L-serine and tRNA(Sec): step 1/1. Functionally, catalyzes the attachment of serine to tRNA(Ser). Is also able to aminoacylate tRNA(Sec) with serine, to form the misacylated tRNA L-seryl-tRNA(Sec), which will be further converted into selenocysteinyl-tRNA(Sec). The protein is Serine--tRNA ligase, cytoplasmic of Plasmodium falciparum (isolate 3D7).